The sequence spans 1235 residues: Structural maintenance of chromosomes protein 1B (1235 aa).

32 to 39 is an ATP binding site; that stretch reads GPNGSGKS. Residues 156-490 adopt a coiled-coil conformation; that stretch reads EEISTSGELI…RSELQNAGID (335 aa). Residues 514-629 enclose the SMC hinge domain; sequence SVFGRLFDLC…ETMEEARHIA (116 aa). N6-acetyllysine is present on residues lysine 648 and lysine 713. 3 coiled-coil regions span residues 666–934, 970–994, and 1022–1049; these read WDEK…LDCK, EKEE…SDQE, and RALE…KEAR. At lysine 1033 the chain carries N6-acetyllysine.

This sequence belongs to the SMC family. SMC1 subfamily. In terms of assembly, forms a heterodimer with SMC3. Component of a meiosis-specific cohesin complex, probably composed of the SMC1B and SMC3 heterodimer attached via their SMC hinge domain, RAD21 (or its meiosis-specific related protein REC8), which link them, and STAG3, which interacts with RAD21 or REC8. The cohesin complex interacts with the cohesin loading complex subunits NIPBL/Scc2 (via HEAT repeats) and MAU2/Scc4. NIPBL directly contacts all members of the complex, RAD21, SMC1A/B, SMC3 and STAG1.

Its subcellular location is the nucleus. The protein resides in the chromosome. The protein localises to the centromere. In terms of biological role, meiosis-specific component of cohesin complex. Required for the maintenance of meiotic cohesion, but not, or only to a minor extent, for its establishment. Contributes to axial element (AE) formation and the organization of chromatin loops along the AE. Plays a key role in synapsis, recombination and chromosome movements. The cohesin complex is required for the cohesion of sister chromatids after DNA replication. The cohesin complex apparently forms a large proteinaceous ring within which sister chromatids can be trapped. At anaphase, the complex is cleaved and dissociates from chromatin, allowing sister chromatids to segregate. The meiosis-specific cohesin complex probably replaces mitosis specific cohesin complex when it dissociates from chromatin during prophase I. In Homo sapiens (Human), this protein is Structural maintenance of chromosomes protein 1B (SMC1B).